A 1048-amino-acid polypeptide reads, in one-letter code: Ankyrin repeat domain-containing protein 27 (1048 aa).

Residues 1–372 form a sufficient for GEF activity towards RAB21 region; the sequence is MALYDEDLLK…RQGSLSTKTP (372 aa). The region spanning 233–371 is the VPS9 domain; sequence ASEDAAFNKI…IRQGSLSTKT (139 aa). 6 ANK repeats span residues 396-426, 462-491, 495-524, 528-557, 564-593, and 597-627; these read TPID…DKDA, RGQT…VVNA, HGST…STEV, NGNT…QACR, KGDT…PTAV, and LKET…RPRP. The interval 396–460 is sufficient for interaction with VPS29; sequence TPIDCLFKHI…PSVVTPFSRD (65 aa). Positions 451 to 600 are interaction with RAB38; that stretch reads PSVVTPFSRD…TAVQNRLKET (150 aa). The interval 451–729 is interaction with RAB32; sequence PSVVTPFSRD…CAPAQKLARI (279 aa). The segment covering 618–627 has biased composition (basic and acidic residues); that stretch reads HLSSDRRPRP. The segment at 618 to 650 is disordered; it reads HLSSDRRPRPSEVPAQSPTRSVDSISQGSSTSS. Positions 638 to 650 are enriched in low complexity; sequence SVDSISQGSSTSS. The segment at 658-707 is required for interaction with VAMP7; sequence FRQEEVKKDYREVEKLLRAVADGDLEMVRYLLEWTEDDLDDVEDAISTVD. 5 ANK repeats span residues 668 to 698, 742 to 771, 775 to 804, 808 to 837, and 841 to 870; these read REVE…DLDD, DGFS…YSGA, SQAV…KPNK, SGNT…SINA, and KGNT…SVDI. The interval 692–745 is sufficient for interaction with VPS29; it reads TEDDLDDVEDAISTVDLEFCHPLCQCPKCAPAQKLARISANGLSVNVTNQDGFS. Residues 949-962 are compositionally biased toward basic and acidic residues; that stretch reads ERTSRETMGRDRSV. A disordered region spans residues 949–1019; it reads ERTSRETMGR…AAPGHRPMVR (71 aa). Phosphoserine occurs at positions 961 and 969. The segment covering 979-995 has biased composition (polar residues); that stretch reads TGKQSDLSDLSRYQTSE. The span at 996 to 1006 shows a compositional bias: basic and acidic residues; that stretch reads EGNKGLPERPV. Thr1022 carries the post-translational modification Phosphothreonine.

Interacts with RAB21 (GDP-bound form), VPS29, KIF5A, KIF5C, GOLGA4. Interacts with RAB32 (GTP-bound form), RAB38 (GTP-bound form), VAMP7. Interacts with low affinity with RAB5. ANKRD27:RAB32 heterodimers can homodimerize to form tetramers. Can interact with RAB38 or RAB32, VPS29 and VAMP7 simultaneously. A decreased interaction with RAB32 seen in the presence of SGSM2.

It localises to the early endosome. The protein localises to the late endosome. It is found in the cytoplasmic vesicle membrane. Its subcellular location is the lysosome. The protein resides in the cell membrane. It localises to the melanosome. The protein localises to the cytoplasmic vesicle. Its function is as follows. May be a guanine exchange factor (GEF) for Rab21, Rab32 and Rab38 and regulate endosome dynamics. May regulate the participation of VAMP7 in membrane fusion events; in vitro inhibits VAMP7-mediated SNARE complex formation by trapping VAMP7 in a closed, fusogenically inactive conformation. Involved in peripheral melanosomal distribution of TYRP1 in melanocytes; the function, which probably is implicating vesicle-trafficking, includes cooperation with Rab32, Rab38 and VAMP7. Involved in the regulation of neurite growth; the function seems to require its GEF activity, probably towards Rab21, and VAMP7 but not Rab32/38. Proposed to be involved in Golgi sorting of VAMP7 and transport of VAMP7 vesicles to the cell surface; the function seems to implicate kinesin heavy chain isoform 5 proteins, GOLGA4, RAB21 and MACF1. Required for the colocalization of VAMP7 and Rab21, probably on TGN sites. Involved in GLUT1 endosome-to-plasma membrane trafficking; the function is dependent of association with VPS29. Regulates the proper trafficking of melanogenic enzymes TYR, TYRP1 and DCT/TYRP2 to melanosomes in melanocytes. In Mus musculus (Mouse), this protein is Ankyrin repeat domain-containing protein 27 (Ankrd27).